Reading from the N-terminus, the 802-residue chain is Ribosome-releasing factor 2, mitochondrial (802 aa).

Residues 13–297 (KKIRNIGIIA…AVVDFLPSPA (285 aa)) form the tr-type G domain. Residues 22–29 (AHIDAGKT), 86–90 (DTPGH), and 140–143 (NKMD) contribute to the GTP site.

It belongs to the TRAFAC class translation factor GTPase superfamily. Classic translation factor GTPase family. EF-G/EF-2 subfamily.

Its subcellular location is the mitochondrion. Functionally, mitochondrial GTPase that mediates the disassembly of ribosomes from messenger RNA at the termination of mitochondrial protein biosynthesis. Not involved in the GTP-dependent ribosomal translocation step during translation elongation. The chain is Ribosome-releasing factor 2, mitochondrial from Yarrowia lipolytica (strain CLIB 122 / E 150) (Yeast).